Reading from the N-terminus, the 140-residue chain is LSAADKGHVKAAWGKVGSHAAEYGAEALERMFLSFPTTKTYFPHFDLSHGSAQVKGHGAKVAAALTKAVDHLDDLPGALSDLSDLHAHKLRVDPVNFKLLSHSLLVTLASHLPGDFTPAVHASLDKFLANVSTVLTSKYR.

Positions Leu1–Arg140 constitute a Globin domain. Ser2 is modified (phosphoserine). N6-succinyllysine occurs at positions 6 and 10. At Lys15 the chain carries N6-acetyllysine; alternate. Lys15 carries the N6-succinyllysine; alternate modification. Tyr23 carries the post-translational modification Phosphotyrosine. Ser34 carries the phosphoserine modification. Lys39 carries the post-translational modification N6-succinyllysine. Ser48 is subject to Phosphoserine. His57 contacts O2. Residue His86 coordinates heme b. At Ser101 the chain carries Phosphoserine. Thr107 is subject to Phosphothreonine. Ser123 is modified (phosphoserine). A phosphothreonine mark is found at Thr133 and Thr136. Position 137 is a phosphoserine (Ser137).

It belongs to the globin family. As to quaternary structure, heterotetramer of two alpha chains and two beta chains. As to expression, red blood cells.

Involved in oxygen transport from the lung to the various peripheral tissues. In terms of biological role, hemopressin acts as an antagonist peptide of the cannabinoid receptor CNR1. Hemopressin-binding efficiently blocks cannabinoid receptor CNR1 and subsequent signaling. The sequence is that of Hemoglobin subunit alpha (HBA) from Tragelaphus strepsiceros (Greater kudu).